Here is a 133-residue protein sequence, read N- to C-terminus: Small ribosomal subunit protein uS11 (133 aa).

Belongs to the universal ribosomal protein uS11 family. In terms of assembly, part of the 30S ribosomal subunit. Interacts with proteins S7 and S18. Binds to IF-3.

Its function is as follows. Located on the platform of the 30S subunit, it bridges several disparate RNA helices of the 16S rRNA. Forms part of the Shine-Dalgarno cleft in the 70S ribosome. This chain is Small ribosomal subunit protein uS11, found in Brevibacillus brevis (strain 47 / JCM 6285 / NBRC 100599).